We begin with the raw amino-acid sequence, 631 residues long: 1-deoxy-D-xylulose-5-phosphate synthase (631 aa).

Residues His-87 and 128–130 (GHS) each bind thiamine diphosphate. Position 159 (Asp-159) interacts with Mg(2+). Thiamine diphosphate-binding positions include 160–161 (GA), Asn-188, Phe-295, and Glu-377. Asn-188 provides a ligand contact to Mg(2+).

This sequence belongs to the transketolase family. DXPS subfamily. In terms of assembly, homodimer. It depends on Mg(2+) as a cofactor. Thiamine diphosphate is required as a cofactor.

The catalysed reaction is D-glyceraldehyde 3-phosphate + pyruvate + H(+) = 1-deoxy-D-xylulose 5-phosphate + CO2. The protein operates within metabolic intermediate biosynthesis; 1-deoxy-D-xylulose 5-phosphate biosynthesis; 1-deoxy-D-xylulose 5-phosphate from D-glyceraldehyde 3-phosphate and pyruvate: step 1/1. Functionally, catalyzes the acyloin condensation reaction between C atoms 2 and 3 of pyruvate and glyceraldehyde 3-phosphate to yield 1-deoxy-D-xylulose-5-phosphate (DXP). The sequence is that of 1-deoxy-D-xylulose-5-phosphate synthase from Pseudomonas putida (strain W619).